An 82-amino-acid chain; its full sequence is Protein WFDC11 (82 aa).

An N-terminal signal peptide occupies residues methionine 1 to glycine 21.

It localises to the secreted. This Mus musculus (Mouse) protein is Protein WFDC11 (Wfdc11).